Reading from the N-terminus, the 166-residue chain is Outer membrane protein assembly factor BamE (166 aa).

Residues 1–18 (MKRTVFPLAVAAALTLTA) form the signal peptide. Residue Cys19 is the site of N-palmitoyl cysteine attachment. Residue Cys19 is the site of S-diacylglycerol cysteine attachment. A disordered region spans residues 143–166 (LFSNDDSGEMPVKPESKPSDLLNE).

The protein belongs to the BamE family. In terms of assembly, part of the Bam complex.

The protein localises to the cell outer membrane. In terms of biological role, part of the outer membrane protein assembly complex, which is involved in assembly and insertion of beta-barrel proteins into the outer membrane. The protein is Outer membrane protein assembly factor BamE of Methylomonas methanica (strain DSM 25384 / MC09).